A 1185-amino-acid chain; its full sequence is Adhesion G-protein coupled receptor G6 (1185 aa).

A signal peptide spans 1–32 (MISFISGRWWRWKFQNTLAVFLLLICLSTSVA). At 33 to 849 (QSCQSSTSCN…AELIDEKNNR (817 aa)) the chain is on the extracellular side. Residues Cys41 and Cys67 are joined by a disulfide bond. Residues 41–149 (CNVVLTDSQG…KGFHISYKQV (109 aa)) enclose the CUB domain. Positions 41–354 (CNVVLTDSQG…SSTQTDSTLS (314 aa)) are mediates interaction with type IV collagen. The inhibits receptor signaling in absence of type IV collagen stretch occupies residues 41–839 (CNVVLTDSQG…FGILMDVSRA (799 aa)). Asn68 is a glycosylation site (N-linked (GlcNAc...) asparagine). Ca(2+) contacts are provided by Glu89 and Asp97. A disulfide bridge links Cys94 with Cys111. Asn121 carries N-linked (GlcNAc...) asparagine glycosylation. Ca(2+) is bound by residues Asp134, Ser136, and Val137. In terms of domain architecture, Pentraxin (PTX) spans 154-355 (RNQKVTMPKS…STQTDSTLSC (202 aa)). 3 disulfides stabilise this stretch: Cys185–Cys248, Cys229–Cys271, and Cys369–Cys375. Residues Asn395, Asn429, Asn470, Asn539, Asn550, Asn562, Asn565, Asn613, Asn680, Asn691, Asn719, Asn763, Asn799, and Asn818 are each glycosylated (N-linked (GlcNAc...) asparagine). 2 disulfide bridges follow: Cys508–Cys544 and Cys532–Cys563. Residues 658-840 (PSLTISSKNL…GILMDVSRAA (183 aa)) form the GAIN-B domain. Disulfide bonds link Cys790–Cys822 and Cys809–Cys824. The segment at 790–840 (CVFWDFNLQNYSGGCNSDGCKVGSDSNSNRTVCLCNHLTHFGILMDVSRAA) is GPS. Residues 829 to 837 (HFGILMDVS) are stachel. A helical transmembrane segment spans residues 850–870 (VLTFITYIGCGISAIFSAATL). The Cytoplasmic portion of the chain corresponds to 871–886 (LTYIAFEKLRRDYPSK). The helical transmembrane segment at 887–907 (ILMNLSTSLLFLNMVFLLDGW) threads the bilayer. Residues 908–915 (LASYEIKE) lie on the Extracellular side of the membrane. Residues 916–936 (LCVTVAVFLHFFLLTSFTWMG) form a helical membrane-spanning segment. At 937-957 (LESIHMYIALVKVFNTYIRRY) the chain is on the cytoplasmic side. Residues 958 to 978 (ILKFCIVGWGVPAAIVGIVLA) traverse the membrane as a helical segment. Topologically, residues 979 to 1013 (VSKDSYGKNYYGKGKDGQGTSEFCWILNPVVFYVT) are extracellular. Residues 1014–1034 (CVAYFSIIFLMNVAMFIVVMI) form a helical membrane-spanning segment. Topologically, residues 1035–1057 (QICGRNGKRSNRTLREDILRNLR) are cytoplasmic. Residues 1058–1080 (SVVSLTFLLGMTWGFAFFAWGPV) form a helical membrane-spanning segment. Residues 1081–1083 (SLA) are Extracellular-facing. Residues 1084 to 1106 (FMYLFTIFNSLQGLFIFVFHCAL) form a helical membrane-spanning segment. A 17alpha-hydroxyprogesterone-binding site is contributed by Asn1092. Residues 1107-1185 (KENVQKQWRR…RHSNADSTLQ (79 aa)) lie on the Cytoplasmic side of the membrane. Positions 1138–1160 (NTKKVSSDNLGKSLSSSSFGSTT) are disordered. Positions 1144–1158 (SDNLGKSLSSSSFGS) are enriched in low complexity.

The protein belongs to the G-protein coupled receptor 2 family. Adhesion G-protein coupled receptor (ADGR) subfamily. In terms of processing, autoproteolytically processed at the GPS region of the GAIN-B domain; this cleavage modulates receptor activity. Expressed in Schwann cells of the posterior lateral line nerve and in brain.

Its subcellular location is the cell membrane. With respect to regulation, forms a heterodimer of 2 chains generated by proteolytic processing that remain associated through non-covalent interactions mediated by the GAIN-B domain. In the inactivated receptor, the Stachel sequence (also named stalk) is embedded in the GAIN-B domain, where it adopts a beta-strand conformation. On activation, the Stachel moves into the 7 transmembrane region and adopts a twisted hook-shaped configuration that forms contacts within the receptor, leading to coupling of a G-alpha protein, which activates signaling. The cleaved GAIN-B and N-terminal domains can then dissociate from the rest of the receptor. In terms of biological role, adhesion G-protein coupled receptor (aGPCR) for steroid hormones, such as progesterone and 17alpha-hydroxyprogesterone (17OHP). Ligand binding causes a conformation change that triggers signaling via guanine nucleotide-binding proteins (G proteins) and modulates the activity of downstream effectors, such as adenylate cyclase. Adgrg6 is coupled to G(i) G alpha proteins and mediates inhibition of adenylate cyclase. Also able to couple to G(q) G proteins. Involved in myelination of the peripheral nervous system: required for differentiation of promyelinating Schwann cells and for normal myelination of axons. G-protein coupled receptor activity can also be activated by type IV collagen, a major constituent of the basement membrane. Also plays a role inner ear development. The chain is Adhesion G-protein coupled receptor G6 (adgrg6) from Danio rerio (Zebrafish).